The primary structure comprises 149 residues: Nucleoside diphosphate kinase 1 (149 aa).

ATP contacts are provided by Lys-10, Phe-58, Arg-86, Thr-92, Arg-103, and Asn-113. His-116 (pros-phosphohistidine intermediate) is an active-site residue.

The protein belongs to the NDK family. Mg(2+) is required as a cofactor.

It carries out the reaction a 2'-deoxyribonucleoside 5'-diphosphate + ATP = a 2'-deoxyribonucleoside 5'-triphosphate + ADP. The catalysed reaction is a ribonucleoside 5'-diphosphate + ATP = a ribonucleoside 5'-triphosphate + ADP. Functionally, major role in the synthesis of nucleoside triphosphates other than ATP. The ATP gamma phosphate is transferred to the NDP beta phosphate via a ping-pong mechanism, using a phosphorylated active-site intermediate. This NDK is microtubule-associated. The chain is Nucleoside diphosphate kinase 1 (NDPK1) from Pisum sativum (Garden pea).